The following is a 156-amino-acid chain: Ribonuclease H (156 aa).

Residues 1–142 (MGKQVEIFTD…CDELARAAAN (142 aa)) enclose the RNase H type-1 domain. Positions 10, 48, 70, and 134 each coordinate Mg(2+).

Belongs to the RNase H family. As to quaternary structure, monomer. Mg(2+) is required as a cofactor.

It is found in the cytoplasm. The enzyme catalyses Endonucleolytic cleavage to 5'-phosphomonoester.. Endonuclease that specifically degrades the RNA of RNA-DNA hybrids. The sequence is that of Ribonuclease H from Photorhabdus luminescens (Xenorhabdus luminescens).